We begin with the raw amino-acid sequence, 226 residues long: Endonuclease V (226 aa).

Mg(2+)-binding residues include aspartate 43 and aspartate 108.

It belongs to the endonuclease V family. Mg(2+) serves as cofactor.

It is found in the cytoplasm. The enzyme catalyses Endonucleolytic cleavage at apurinic or apyrimidinic sites to products with a 5'-phosphate.. In terms of biological role, DNA repair enzyme involved in the repair of deaminated bases. Selectively cleaves double-stranded DNA at the second phosphodiester bond 3' to a deoxyinosine leaving behind the intact lesion on the nicked DNA. In Thermosipho melanesiensis (strain DSM 12029 / CIP 104789 / BI429), this protein is Endonuclease V.